Reading from the N-terminus, the 63-residue chain is uncharacterized protein (63 aa).

It localises to the mitochondrion. This is an uncharacterized protein from Marchantia polymorpha (Common liverwort).